A 100-amino-acid polypeptide reads, in one-letter code: MAKKSMLMRESKRAKLVEKYRQRRNELKQLIKSSDDFQVIMESQAKLAKLPVNSNPVRYVTRCKQCGRPHAVYRKFNLCRICLRQQLMVGNIPGGRKSSW.

4 residues coordinate Zn(2+): C63, C66, C79, and C82.

It belongs to the universal ribosomal protein uS14 family. As to quaternary structure, part of the 30S ribosomal subunit. Contacts proteins S3 and S10. Zn(2+) serves as cofactor.

Its function is as follows. Binds 16S rRNA, required for the assembly of 30S particles and may also be responsible for determining the conformation of the 16S rRNA at the A site. The sequence is that of Small ribosomal subunit protein uS14 (rpsN) from Legionella pneumophila (strain Paris).